A 359-amino-acid polypeptide reads, in one-letter code: DNA polymerase IV (359 aa).

The region spanning 4-185 (IIHVDMDCFF…LALIKIPGVG (182 aa)) is the UmuC domain. Residues Asp8 and Asp103 each coordinate Mg(2+). Glu104 is an active-site residue.

Belongs to the DNA polymerase type-Y family. Monomer. Mg(2+) serves as cofactor.

Its subcellular location is the cytoplasm. The enzyme catalyses DNA(n) + a 2'-deoxyribonucleoside 5'-triphosphate = DNA(n+1) + diphosphate. Poorly processive, error-prone DNA polymerase involved in untargeted mutagenesis. Copies undamaged DNA at stalled replication forks, which arise in vivo from mismatched or misaligned primer ends. These misaligned primers can be extended by PolIV. Exhibits no 3'-5' exonuclease (proofreading) activity. May be involved in translesional synthesis, in conjunction with the beta clamp from PolIII. The chain is DNA polymerase IV from Shewanella loihica (strain ATCC BAA-1088 / PV-4).